The following is a 485-amino-acid chain: MITDLTFTQLRDKLKNKELSSLQILRAFKDEYEKDLKHPLPLNGFVEFFEDAEEHAKKADELIAQGVSFDEKPLLGLPIAVKDNISMAGKLCTCCSRSLQGYYAPYNATVIDRLLEAGAVLMGRINMDELAMGSSTEFSCYGPSRNPVDRARTPGGSSGGSAAVVAGNQAPFSLGTETGGSVRLPASYCGIYGLKPTYGLFSRYGVVAFSSSLDQVGLFGKEAADIALGLAVMAGKDEKDETSEEADFSSLLKLSAYSKEEIASLKIAIPKEFLNTQGLDQEVKQVFDELCAWLTKNGAKLEEVSIPVLEASIPTYYTLAISEAASNLSRIDGIRFGLRKDTGKGNDELYIQTRSEGFGPEVKRRIITGNYVLSKEFSGDCYEKSLNVRAKIAQGVNEVLQKYDFIICPTAPAPAFKLNEKVDDPIAMYLSDLFTTFVNLARIPSLSVPAGKTKAGLPVGIQFCGKKFSEDRILKLAKAWEEQNA.

Residues lysine 82 and serine 157 each act as charge relay system in the active site. Serine 181 functions as the Acyl-ester intermediate in the catalytic mechanism.

It belongs to the amidase family. GatA subfamily. In terms of assembly, heterotrimer of A, B and C subunits.

It carries out the reaction L-glutamyl-tRNA(Gln) + L-glutamine + ATP + H2O = L-glutaminyl-tRNA(Gln) + L-glutamate + ADP + phosphate + H(+). Functionally, allows the formation of correctly charged Gln-tRNA(Gln) through the transamidation of misacylated Glu-tRNA(Gln) in organisms which lack glutaminyl-tRNA synthetase. The reaction takes place in the presence of glutamine and ATP through an activated gamma-phospho-Glu-tRNA(Gln). The protein is Glutamyl-tRNA(Gln) amidotransferase subunit A of Treponema denticola (strain ATCC 35405 / DSM 14222 / CIP 103919 / JCM 8153 / KCTC 15104).